The primary structure comprises 199 residues: MKSLTAVCQTGASGMPALNASGRIQRHPTHRGDGENAEMKMYLSKLKDLVPFMPKNRKLTKLEIIQHVIDYICDLQTELETHPEMGNFDAAAALTAVNGLHEDEDSDMEDADAEAEAEVDPDILAQRLNAEQPAKVSSPAARLPLTDRQTPNTLVAPAHPQQHQQQQQLQLQQQQLQSQQQLSNSLATPQNAEKDSRQS.

A bHLH domain is found at 23–75; it reads RIQRHPTHRGDGENAEMKMYLSKLKDLVPFMPKNRKLTKLEIIQHVIDYICDL. At Ser-106 the chain carries Phosphoserine. The interval 127–199 is disordered; that stretch reads RLNAEQPAKV…QNAEKDSRQS (73 aa). The span at 161–182 shows a compositional bias: low complexity; the sequence is QQHQQQQQLQLQQQQLQSQQQL.

As to quaternary structure, heterodimer with other HLH proteins.

It is found in the nucleus. In terms of biological role, participates in sensory organ patterning by antagonizing the neurogenic activity of the Achaete-scute complex (AS-C). It lacks a basic DNA-binding domain but is able to form heterodimers with other HLH proteins, thereby inhibiting DNA binding. May sequester proneural proteins in complexes inefficient for DNA interaction. EMC also affects vein differentiation. Inhibits the activity of AS-C proteins by forming an non-DNA binding heterodimer. This chain is Protein extra-macrochaetae (emc), found in Drosophila melanogaster (Fruit fly).